Here is an 805-residue protein sequence, read N- to C-terminus: Mitochondrial inner membrane m-AAA protease component AFG3L2 (805 aa).

The transit peptide at 1–39 (MAHRCLLLWGRGACRPRGMPPMLLPGGRTGSTERLYLRM) directs the protein to the mitochondrion. The propeptide at 40 to 67 (LYRYATTQAKTSRNSLLTDVIAAYQRLC) is removed in mature form. Positions 74–127 (FEKYFPNGKNGKKTSEPKEVMGEKKEPKPAAAPRPSGGGVGGGGKRGGKKDDSH) are disordered. Residues 86–101 (KTSEPKEVMGEKKEPK) show a composition bias toward basic and acidic residues. The span at 109–118 (SGGGVGGGGK) shows a compositional bias: gly residues. Position 118 is an N6-succinyllysine (Lys118). 2 helical membrane passes run 144-164 (FKMY…YFLF) and 252-272 (GSFL…LYTI). ATP is bound by residues Val311, Ala312, Thr353, Gly354, Lys355, Thr356, Leu357, and His491. Residue His575 participates in Zn(2+) binding. The active site involves Glu576. Zn(2+)-binding residues include His579 and Asp650. The segment at 760 to 805 (FVEGTGSLDEDTSLPEGLKDWNREREGSEEPSGEKVTSPVQGAGPA) is disordered. Positions 776-787 (GLKDWNREREGS) are enriched in basic and acidic residues.

It in the N-terminal section; belongs to the AAA ATPase family. The protein in the C-terminal section; belongs to the peptidase M41 family. As to quaternary structure, homohexamer. Forms heterohexamers with SPG7. The m-AAA protease is either composed of homohexamers of AFG3L2 or heterohexamers of AFG3L2 and SPG7. Interacts with MAIP1. Interacts with DNAJC19. Interacts with PHB2. Zn(2+) is required as a cofactor. Upon import into the mitochondrion, the N-terminal transit peptide is cleaved to generate an intermediate form which undergoes autocatalytic proteolytic processing to generate the proteolytically active mature form.

The protein resides in the mitochondrion inner membrane. It catalyses the reaction ATP + H2O = ADP + phosphate + H(+). Its function is as follows. Catalytic component of the m-AAA protease, a protease that plays a key role in proteostasis of inner mitochondrial membrane proteins, and which is essential for axonal and neuron development. AFG3L2 possesses both ATPase and protease activities: the ATPase activity is required to unfold substrates, threading them into the internal proteolytic cavity for hydrolysis into small peptide fragments. The m-AAA protease carries out protein quality control in the inner membrane of the mitochondria by mediating degradation of mistranslated or misfolded polypeptides. The m-AAA protease complex also promotes the processing and maturation of mitochondrial proteins, such as MRPL32/bL32m, PINK1 and SP7. Mediates protein maturation of the mitochondrial ribosomal subunit MRPL32/bL32m by catalyzing the cleavage of the presequence of MRPL32/bL32m prior to assembly into the mitochondrial ribosome. Required for SPG7 maturation into its active mature form after SPG7 cleavage by mitochondrial-processing peptidase (MPP). Required for the maturation of PINK1 into its 52kDa mature form after its cleavage by mitochondrial-processing peptidase (MPP). Acts as a regulator of calcium in neurons by mediating degradation of SMDT1/EMRE before its assembly with the uniporter complex, limiting the availability of SMDT1/EMRE for MCU assembly and promoting efficient assembly of gatekeeper subunits with MCU. Promotes the proteolytic degradation of GHITM upon hyperpolarization of mitochondria: progressive GHITM degradation leads to respiratory complex I degradation and broad reshaping of the mitochondrial proteome by AFG3L2. Also acts as a regulator of mitochondrial glutathione homeostasis by mediating cleavage and degradation of SLC25A39. SLC25A39 cleavage is prevented when SLC25A39 binds iron-sulfur. Involved in the regulation of OMA1-dependent processing of OPA1. May act by mediating processing of OMA1 precursor, participating in OMA1 maturation. The chain is Mitochondrial inner membrane m-AAA protease component AFG3L2 (AFG3L2) from Bos taurus (Bovine).